Here is a 63-residue protein sequence, read N- to C-terminus: KDGYPMDSKGCKISCLISDTFCDTECKMKKAKSGYCYSRGLACWCEGLPENVEVWDKATNKCG.

The 63-residue stretch at 1–63 folds into the LCN-type CS-alpha/beta domain; it reads KDGYPMDSKG…VWDKATNKCG (63 aa). 4 disulfides stabilise this stretch: cysteine 11-cysteine 62, cysteine 15-cysteine 36, cysteine 22-cysteine 43, and cysteine 26-cysteine 45. Residue glycine 63 is modified to Glycine amide.

As to expression, expressed by the venom gland.

Its subcellular location is the secreted. In terms of biological role, beta toxins bind voltage-independently at site-4 of sodium channels (Nav) and shift the voltage of activation toward more negative potentials thereby affecting sodium channel activation and promoting spontaneous and repetitive firing. Is highly active on insects, since it provokes paralysis and death when injected into crickets. This chain is Ct-IT2, found in Centruroides tecomanus (Scorpion).